Reading from the N-terminus, the 301-residue chain is MSEDIRRGPGRPPKKRVVPNFERKGILEKPVRPQSRLEFSYDNPLIFKNLFIYFKNLKSKNILVRCTPTEITFFSRDQSQASFVIATIDGKNVNHYYASDVFWLGINRELVEKMFNSIDRSFLKITIVHRYDKPETLFFIFTDFDIDKECTYQITVSEPELDMDLIEMEKSISEERLKNYPLRWEFTSKQLKKTFSDLSNYTELVTIEKLGGDTPLHLYFQKFNSISYHEMYKSSNKINLTSTIPKSQVFQINVKIAHIKSLASAMVTDKIRILCEENGNLIFQSEMDALMLNTITLNNTI.

It belongs to the asfivirus E301R family. As to quaternary structure, interacts with host IRF3.

In terms of biological role, plays a role in the inhibition of host innate immune system by acting as a negatively regulator of type I interferon production. Mechanistically, interacts with and prevents host IRF3 nuclear localization to inhibit its transcriptional activity. This is an uncharacterized protein from African swine fever virus (strain Badajoz 1971 Vero-adapted) (Ba71V).